Consider the following 867-residue polypeptide: Probable alpha,alpha-trehalose-phosphate synthase [UDP-forming] 9 (867 aa).

Ser-5 is modified (phosphoserine). A Phosphothreonine modification is found at Thr-32. The segment at 59–546 (ERKIIVANML…AKSFMQDLER (488 aa)) is glycosyltransferase.

It in the N-terminal section; belongs to the glycosyltransferase 20 family. In the C-terminal section; belongs to the trehalose phosphatase family.

It carries out the reaction D-glucose 6-phosphate + UDP-alpha-D-glucose = alpha,alpha-trehalose 6-phosphate + UDP + H(+). The polypeptide is Probable alpha,alpha-trehalose-phosphate synthase [UDP-forming] 9 (TPS9) (Arabidopsis thaliana (Mouse-ear cress)).